The primary structure comprises 201 residues: Glycerol-3-phosphate acyltransferase (201 aa).

The next 5 helical transmembrane spans lie at 5–25 (LLGA…FGVV), 55–75 (KMGV…ILLA), 88–108 (WSTA…WLGF), 118–138 (LGIF…GYAV), and 164–184 (TYGV…LIFL).

The protein belongs to the PlsY family. In terms of assembly, probably interacts with PlsX.

The protein resides in the cell inner membrane. It carries out the reaction an acyl phosphate + sn-glycerol 3-phosphate = a 1-acyl-sn-glycero-3-phosphate + phosphate. The protein operates within lipid metabolism; phospholipid metabolism. Functionally, catalyzes the transfer of an acyl group from acyl-phosphate (acyl-PO(4)) to glycerol-3-phosphate (G3P) to form lysophosphatidic acid (LPA). This enzyme utilizes acyl-phosphate as fatty acyl donor, but not acyl-CoA or acyl-ACP. The chain is Glycerol-3-phosphate acyltransferase from Anaeromyxobacter dehalogenans (strain 2CP-C).